The chain runs to 81 residues: Small ribosomal subunit protein bS16 (81 aa).

This sequence belongs to the bacterial ribosomal protein bS16 family.

This is Small ribosomal subunit protein bS16 from Desulfotalea psychrophila (strain LSv54 / DSM 12343).